Consider the following 288-residue polypeptide: uncharacterized protein (288 aa).

2 disordered regions span residues 31 to 52 and 179 to 288; these read KAVD…EAPS and YPSK…VELK. Over residues 206–217 the composition is skewed to polar residues; it reads RPSSPTNFSKLI. The span at 221–236 shows a compositional bias: basic and acidic residues; it reads YKDEWLQQQADSDKRA. Composition is skewed to low complexity over residues 237-249 and 267-276; these read PQTP…SPSP and AAESSPLSSA.

This is an uncharacterized protein from Bos taurus (Bovine).